The primary structure comprises 278 residues: Phosphatidylglycerol--prolipoprotein diacylglyceryl transferase (278 aa).

A run of 4 helical transmembrane segments spans residues 17 to 37 (LAVRWYGLMYLLGFSLFILLG), 57 to 77 (ALFYGVLGVILGGRLGHVLFY), 89 to 109 (ILAIWQGGMSFHGGFLGVAIA), and 119 to 139 (LSWLAVTDFIAPLVPLGLGAG). An a 1,2-diacyl-sn-glycero-3-phospho-(1'-sn-glycerol)-binding site is contributed by Arg140. 3 helical membrane passes run 174–194 (QLYEFALEGLVLFALIWLYSA), 200–220 (GAVTGMFMIGYGAFRSFCEFF), and 233–253 (LGISMGQWLSLPMIAAGIALL).

The protein belongs to the Lgt family.

It localises to the cell inner membrane. The enzyme catalyses L-cysteinyl-[prolipoprotein] + a 1,2-diacyl-sn-glycero-3-phospho-(1'-sn-glycerol) = an S-1,2-diacyl-sn-glyceryl-L-cysteinyl-[prolipoprotein] + sn-glycerol 1-phosphate + H(+). Its pathway is protein modification; lipoprotein biosynthesis (diacylglyceryl transfer). In terms of biological role, catalyzes the transfer of the diacylglyceryl group from phosphatidylglycerol to the sulfhydryl group of the N-terminal cysteine of a prolipoprotein, the first step in the formation of mature lipoproteins. The chain is Phosphatidylglycerol--prolipoprotein diacylglyceryl transferase from Nitrosomonas europaea (strain ATCC 19718 / CIP 103999 / KCTC 2705 / NBRC 14298).